The chain runs to 180 residues: Adenine phosphoribosyltransferase (180 aa).

At A2 the chain carries N-acetylalanine. S15 and S30 each carry phosphoserine. Y60 bears the Phosphotyrosine mark. Position 66 is a phosphoserine (S66). K114 bears the N6-acetyllysine mark. At T135 the chain carries Phosphothreonine.

Belongs to the purine/pyrimidine phosphoribosyltransferase family. Homodimer.

It is found in the cytoplasm. It catalyses the reaction AMP + diphosphate = 5-phospho-alpha-D-ribose 1-diphosphate + adenine. It functions in the pathway purine metabolism; AMP biosynthesis via salvage pathway; AMP from adenine: step 1/1. Catalyzes a salvage reaction resulting in the formation of AMP, that is energically less costly than de novo synthesis. The sequence is that of Adenine phosphoribosyltransferase from Dipodillus campestris (North African gerbil).